Consider the following 316-residue polypeptide: Small neutral protease regulatory protein (316 aa).

Residues 1–56 (MRHLRALCAIADTGSVRRAARELGVSQPALTTQLRRIEQSLGAELFHRGRDGCRPT) form the HTH lysR-type domain. Residues 16 to 35 (VRRAARELGVSQPALTTQLR) constitute a DNA-binding region (H-T-H motif).

This sequence belongs to the LysR transcriptional regulatory family.

Functionally, transcriptional trans-activator of the gene (mprA) for the small neutral protease. The sequence is that of Small neutral protease regulatory protein (mprR) from Streptomyces coelicolor.